Reading from the N-terminus, the 731-residue chain is MMRDSPSIQGTLDAATQHALLAGRHADPFSVLGPHQAGAHTVVRVLAPGARTVMAVLPGGQRTPLLPMQPGLFENTVPGLQPGAPAAYRLCIEWEGGIQHTADPYAFGPVLDAAQLDHCAAGGWRYLAGLLGAHAASVDGCAGTRFALWAPNARRVAVVGDFNGWDGRRHAMRLRYPAGVWELFLPDVGPGARYKFQVLGADGHTVLKADPLARQAEAPPATASIVPDERPFAWTDEAWMEQRAARQRCDAPISIYEVHAGSWFDDAGAPRWQSLAARLPEYARSLGFTHIELLPVMAHPFGGSWGYQPLGLFAPAAAHGAPADFAHFVDRCHEAGLGVILDWVPAHFPDDAHGLARLDGTPLYEHADPREGRHPDWNTLIYNYGRREVRAFLIASAIHWLRHYHVDGLRVDAVASMLYRDYSRPAGQWIPNRHGGRENLEAIDFLRELNAAVGVQCPGAITVAEESTAWPGVTAPVANGGLGFDYKWNMGWMHDTLRYMRRDPIHRRHHHHDLSFGMVYAYAERFVLPLSHDEVVHGKGSLLGKMPGERAAQLAQLRLYYAFMWAHPGKKLLFMGGEFGQQGEWNHDAMLQWSLLDDPAHRGLQRLIADLNHVYATLPELHCRDADPSGFAWIVGDDADNSVLAFARVDASHCLVAVCNFTPVPRPGYRFGVPHAGDWRVRVDTGATRYGGAGGGPPICLRSEPIPAHGHPQSLVLDLPGFTALYLRHSE.

The Nucleophile role is filled by aspartate 412. The active-site Proton donor is glutamate 465.

This sequence belongs to the glycosyl hydrolase 13 family. GlgB subfamily. As to quaternary structure, monomer.

It carries out the reaction Transfers a segment of a (1-&gt;4)-alpha-D-glucan chain to a primary hydroxy group in a similar glucan chain.. It participates in glycan biosynthesis; glycogen biosynthesis. In terms of biological role, catalyzes the formation of the alpha-1,6-glucosidic linkages in glycogen by scission of a 1,4-alpha-linked oligosaccharide from growing alpha-1,4-glucan chains and the subsequent attachment of the oligosaccharide to the alpha-1,6 position. This Bordetella bronchiseptica (strain ATCC BAA-588 / NCTC 13252 / RB50) (Alcaligenes bronchisepticus) protein is 1,4-alpha-glucan branching enzyme GlgB.